A 256-amino-acid chain; its full sequence is uncharacterized protein (256 aa).

A signal peptide spans 1-22; the sequence is MGYLKRFALYISVMILIFAIAG. Cys-23 carries N-palmitoyl cysteine lipidation. Cys-23 carries S-diacylglycerol cysteine lipidation.

The protein belongs to the staphylococcal tandem lipoprotein family.

The protein resides in the cell membrane. This is an uncharacterized protein from Staphylococcus aureus (strain COL).